The chain runs to 252 residues: Chitooligosaccharide deacetylase (252 aa).

Residues His61 and His125 each coordinate Mg(2+).

This sequence belongs to the YdjC deacetylase family. ChbG subfamily. As to quaternary structure, homodimer. It depends on Mg(2+) as a cofactor.

It is found in the cytoplasm. It catalyses the reaction N,N'-diacetylchitobiose + H2O = N-acetyl-beta-D-glucosaminyl-(1-&gt;4)-D-glucosamine + acetate. The catalysed reaction is diacetylchitobiose-6'-phosphate + H2O = N'-monoacetylchitobiose-6'-phosphate + acetate. Its pathway is glycan degradation; chitin degradation. Its function is as follows. Involved in the degradation of chitin. ChbG is essential for growth on the acetylated chitooligosaccharides chitobiose and chitotriose but is dispensable for growth on cellobiose and chitosan dimer, the deacetylated form of chitobiose. Deacetylation of chitobiose-6-P and chitotriose-6-P is necessary for both the activation of the chb promoter by the regulatory protein ChbR and the hydrolysis of phosphorylated beta-glucosides by the phospho-beta-glucosidase ChbF. Catalyzes the removal of only one acetyl group from chitobiose-6-P to yield monoacetylchitobiose-6-P, the inducer of ChbR and the substrate of ChbF. The polypeptide is Chitooligosaccharide deacetylase (Escherichia coli O6:H1 (strain CFT073 / ATCC 700928 / UPEC)).